Here is a 242-residue protein sequence, read N- to C-terminus: Tryptophan synthase alpha chain (242 aa).

Residues Glu-31 and Asp-42 each act as proton acceptor in the active site.

Belongs to the TrpA family. Tetramer of two alpha and two beta chains.

It catalyses the reaction (1S,2R)-1-C-(indol-3-yl)glycerol 3-phosphate + L-serine = D-glyceraldehyde 3-phosphate + L-tryptophan + H2O. It participates in amino-acid biosynthesis; L-tryptophan biosynthesis; L-tryptophan from chorismate: step 5/5. The alpha subunit is responsible for the aldol cleavage of indoleglycerol phosphate to indole and glyceraldehyde 3-phosphate. The chain is Tryptophan synthase alpha chain from Staphylococcus aureus (strain USA300).